The sequence spans 570 residues: Probable metalloreductase AIM14 (570 aa).

A run of 7 helical transmembrane segments spans residues 21 to 41 (IKYG…LALL), 70 to 90 (AIHL…HYSL), 101 to 118 (LGRL…LTLR), 142 to 162 (IITV…AIDD), 177 to 197 (FVGF…IGPM), 204 to 224 (LFYI…PIHS), and 230 to 250 (FPFL…RIVF). Positions 101–219 (LGRLSYALIP…NLVNVAFILL (119 aa)) constitute a Ferric oxidoreductase domain. The region spanning 250-388 (FAKSLMILNK…GGSGISFALP (139 aa)) is the FAD-binding FR-type domain. Over residues 481–505 (SNFNSENADSNDNTPETSHSPTKEN) the composition is skewed to polar residues. Residues 481-507 (SNFNSENADSNDNTPETSHSPTKENGS) are disordered.

This sequence belongs to the ferric reductase (FRE) family. AIM14 subfamily. In terms of assembly, interacts with ribosomes.

It localises to the membrane. Functionally, probable cell surface metalloreductase. May be involved in iron or copper homeostasis. The sequence is that of Probable metalloreductase AIM14 (AIM14) from Saccharomyces cerevisiae (strain RM11-1a) (Baker's yeast).